The primary structure comprises 183 residues: MELNFYTNKVKLEMEKAVQTYSNQIAKISAGKANPKLISGIKFIYYDEPMSIEEMAAISVPEAQQILIKPYDIKTTKNIIESLNKMNYDMQIVDEGAQVRLKFPALTTERRKELVKQLVKLNESAKVAIRQVRQDENKLIKKDEELSEDEQKKYLDEIQKLTDKYIFKIEELNKDKEKELMTI.

This sequence belongs to the RRF family.

It localises to the cytoplasm. In terms of biological role, responsible for the release of ribosomes from messenger RNA at the termination of protein biosynthesis. May increase the efficiency of translation by recycling ribosomes from one round of translation to another. The protein is Ribosome-recycling factor of Mycoplasma mobile (strain ATCC 43663 / 163K / NCTC 11711) (Mesomycoplasma mobile).